A 61-amino-acid polypeptide reads, in one-letter code: Sec-independent protein translocase protein TatA (61 aa).

A helical membrane pass occupies residues 1-21; sequence MFGIGMPELIVILVIVLVVFG.

The protein belongs to the TatA/E family. The Tat system comprises two distinct complexes: a TatABC complex, containing multiple copies of TatA, TatB and TatC subunits, and a separate TatA complex, containing only TatA subunits. Substrates initially bind to the TatABC complex, which probably triggers association of the separate TatA complex to form the active translocon.

It localises to the cell inner membrane. Its function is as follows. Part of the twin-arginine translocation (Tat) system that transports large folded proteins containing a characteristic twin-arginine motif in their signal peptide across membranes. TatA could form the protein-conducting channel of the Tat system. This chain is Sec-independent protein translocase protein TatA, found in Geobacter metallireducens (strain ATCC 53774 / DSM 7210 / GS-15).